We begin with the raw amino-acid sequence, 533 residues long: Frizzled/smoothened-like sans CRD protein H (533 aa).

An N-terminal signal peptide occupies residues 1 to 21; that stretch reads MFIKFYFFIIFLILNFKNNYA. Topologically, residues 22 to 103 are extracellular; that stretch reads SPTLLDSVLS…GDWTTMMDMS (82 aa). Asn-76 carries N-linked (GlcNAc...) asparagine glycosylation. Residues 104-124 traverse the membrane as a helical segment; that stretch reads LIVATISFFASIFLILTYSPL. Residues 125 to 134 lie on the Cytoplasmic side of the membrane; the sequence is MNPSYNNRHT. The chain crosses the membrane as a helical span at residues 135-155; sequence IGILSMSFGIFLIMFTDMYNL. Residues 156–177 lie on the Extracellular side of the membrane; the sequence is KKRFTLGCPSETRYAIQNDADC. A helical transmembrane segment spans residues 178–198; the sequence is LITGLIFQFGCVSAVFFWTAL. Residues 199 to 216 lie on the Cytoplasmic side of the membrane; sequence SLDLYFQITNRNISRKYD. A helical membrane pass occupies residues 217–237; the sequence is LYYFIGVNLISLIFTFVPVIS. Residues 238 to 259 lie on the Extracellular side of the membrane; it reads KSYGYGDFALGCWILDFNYALG. The helical transmembrane segment at 260-280 threads the bilayer; it reads CFWIPLSVCLIFSTVVVLMIL. The Cytoplasmic portion of the chain corresponds to 281 to 302; sequence YEVYKIYKASNQKTSLKGHIKP. The helical transmembrane segment at 303–323 threads the bilayer; that stretch reads LLCLISNCFEFFYVFGYSLYL. Over 324–360 the chain is Extracellular; the sequence is ATKLTELHDNMDAYIKCLFLNSQNDPDSYTCPDHRLK. A helical transmembrane segment spans residues 361 to 381; that stretch reads LGPQFLFFLSLRLLGVSGIVF. Residues 382-533 lie on the Cytoplasmic side of the membrane; that stretch reads YGTNSKVRKI…LTNINTIDNV (152 aa). The segment at 454 to 533 is disordered; the sequence is IIVTPGGDDD…LTNINTIDNV (80 aa). A compositionally biased stretch (low complexity) spans 466–518; that stretch reads NNNNNNNNNNNNNNNNNNNNNNNNNNNNNNNNNNNNNNNNNNNNNSNENNENN. Residues 501–528 are a coiled coil; that stretch reads NNNNNNNNNNSNENNENNTQEIELTNIN. A compositionally biased stretch (polar residues) spans 519–533; it reads TQEIELTNINTIDNV.

This sequence belongs to the G-protein coupled receptor Fz/Smo family.

It is found in the membrane. The polypeptide is Frizzled/smoothened-like sans CRD protein H (fscH) (Dictyostelium discoideum (Social amoeba)).